A 228-amino-acid chain; its full sequence is MPKLILCRHGQSEWNAKNLFTGWEDVNLSEQGINEATRAGEKVRENNIDIDVAFTSLLTRALDTTHYILTESKQQWIPVYKSWRLNERHYGGLQGLNKDDARKEFGEEQVHIWRRSYDVKPPAETEEQREAYLADRRYNHLDKRMMPYSESLKDTLVRVIPFWTDHISQYLLDGQTVLVSAHGNSIRALIKYLEDVSDEDIINYEIKTGAPLVYELTDDLEVIDKYYL.

Substrate-binding positions include 8-15, 21-22, Arg60, 87-90, Lys98, 114-115, and 183-184; these read RHGQSEWN, TG, ERHY, RR, and GN. The Tele-phosphohistidine intermediate role is filled by His9. Glu87 (proton donor/acceptor) is an active-site residue.

This sequence belongs to the phosphoglycerate mutase family. BPG-dependent PGAM subfamily.

It carries out the reaction (2R)-2-phosphoglycerate = (2R)-3-phosphoglycerate. Its pathway is carbohydrate degradation; glycolysis; pyruvate from D-glyceraldehyde 3-phosphate: step 3/5. Its function is as follows. Catalyzes the interconversion of 2-phosphoglycerate and 3-phosphoglycerate. The protein is 2,3-bisphosphoglycerate-dependent phosphoglycerate mutase of Staphylococcus aureus (strain MRSA252).